An 84-amino-acid chain; its full sequence is MSSVEKKPEGVNTGAGDRHNLKTEWPELVGKSVEEAKKVILQDKPEAQIIVLPVGTIVTMEYRIDRVRLFVDKLDNIAQVPRVG.

The disordered stretch occupies residues 1 to 23 (MSSVEKKPEGVNTGAGDRHNLKT).

This sequence belongs to the protease inhibitor I13 (potato type I serine protease inhibitor) family.

In terms of biological role, inhibits both subtilisin and chymotrypsin. The protein is Subtilisin-chymotrypsin inhibitor-2A of Hordeum vulgare (Barley).